A 393-amino-acid chain; its full sequence is 4-hydroxyphenylpyruvate dioxygenase (393 aa).

VOC domains follow at residues 17 to 148 (AFDH…LLER) and 179 to 339 (FLDH…IFSK). Positions 182, 267, and 350 each coordinate Fe cation.

The protein belongs to the 4HPPD family. The cofactor is Fe cation.

It carries out the reaction 3-(4-hydroxyphenyl)pyruvate + O2 = homogentisate + CO2. The protein operates within amino-acid degradation; L-phenylalanine degradation; acetoacetate and fumarate from L-phenylalanine: step 3/6. Its function is as follows. Key enzyme in the degradation of tyrosine. The polypeptide is 4-hydroxyphenylpyruvate dioxygenase (hpd-1) (Caenorhabditis briggsae).